We begin with the raw amino-acid sequence, 533 residues long: Receptor homology region, transmembrane domain- and RING domain-containing protein 1 (533 aa).

An N-terminal signal peptide occupies residues 1–26 (MNRRRTMLLLICLCATFCLMTQLGAA). Residues 27-167 (NVVLMGTNLT…LPAFENSAWS (141 aa)) lie on the Lumenal side of the membrane. N-linked (GlcNAc...) asparagine glycosylation occurs at Asn-34. The cysteines at positions 68 and 91 are disulfide-linked. The 62-residue stretch at 84 to 145 (ALIIRGGCTF…ISKASGEVLK (62 aa)) folds into the PA domain. A helical membrane pass occupies residues 168 to 188 (IMAISFISLLAMSAVLATCFF). Residues 189 to 533 (VRRHHIRRDR…MASAQSLPGC (345 aa)) lie on the Cytoplasmic side of the membrane. The RING-type; atypical zinc finger occupies 236-278 (CAICLEDYNVGEKLRVLPCRHKFHAACVDLWLTTWRTFCPVCK). Disordered regions lie at residues 309–329 (SFRS…PSSQ) and 440–476 (LRRC…LAGA). The span at 448–463 (PSLSTMAPQSPQQSQL) shows a compositional bias: polar residues.

Its subcellular location is the prevacuolar compartment membrane. The protein localises to the protein storage vacuole membrane. It is found in the golgi apparatus membrane. Its function is as follows. Involved in the trafficking of vacuolar proteins. Functions probably as a sorting receptor for protein trafficking to the protein storage vacuole (PSV) by binding the C-terminal vacuolar sorting determinant (VSD) of vacuolar-sorted proteins. The polypeptide is Receptor homology region, transmembrane domain- and RING domain-containing protein 1 (Oryza sativa subsp. japonica (Rice)).